Reading from the N-terminus, the 272-residue chain is Glutamate racemase (272 aa).

Residues 12–13 (DS) and 44–45 (YG) contribute to the substrate site. Cys75 (proton donor/acceptor) is an active-site residue. 76-77 (NT) is a substrate binding site. Cys185 acts as the Proton donor/acceptor in catalysis. Residue 186 to 187 (TH) participates in substrate binding.

The protein belongs to the aspartate/glutamate racemases family.

The enzyme catalyses L-glutamate = D-glutamate. It participates in cell wall biogenesis; peptidoglycan biosynthesis. In terms of biological role, provides the (R)-glutamate required for cell wall biosynthesis. This chain is Glutamate racemase, found in Mycobacterium leprae (strain TN).